Consider the following 305-residue polypeptide: UDP-3-O-acyl-N-acetylglucosamine deacetylase (305 aa).

3 residues coordinate Zn(2+): His-79, His-238, and Asp-242. The Proton donor role is filled by His-265.

The protein belongs to the LpxC family. It depends on Zn(2+) as a cofactor.

It carries out the reaction a UDP-3-O-[(3R)-3-hydroxyacyl]-N-acetyl-alpha-D-glucosamine + H2O = a UDP-3-O-[(3R)-3-hydroxyacyl]-alpha-D-glucosamine + acetate. Its pathway is glycolipid biosynthesis; lipid IV(A) biosynthesis; lipid IV(A) from (3R)-3-hydroxytetradecanoyl-[acyl-carrier-protein] and UDP-N-acetyl-alpha-D-glucosamine: step 2/6. Catalyzes the hydrolysis of UDP-3-O-myristoyl-N-acetylglucosamine to form UDP-3-O-myristoylglucosamine and acetate, the committed step in lipid A biosynthesis. The protein is UDP-3-O-acyl-N-acetylglucosamine deacetylase of Sodalis glossinidius (strain morsitans).